Consider the following 122-residue polypeptide: Ribosome-binding factor A (122 aa).

This sequence belongs to the RbfA family. As to quaternary structure, monomer. Binds 30S ribosomal subunits, but not 50S ribosomal subunits or 70S ribosomes.

It is found in the cytoplasm. In terms of biological role, one of several proteins that assist in the late maturation steps of the functional core of the 30S ribosomal subunit. Associates with free 30S ribosomal subunits (but not with 30S subunits that are part of 70S ribosomes or polysomes). Required for efficient processing of 16S rRNA. May interact with the 5'-terminal helix region of 16S rRNA. This chain is Ribosome-binding factor A, found in Moorella thermoacetica (strain ATCC 39073 / JCM 9320).